Here is a 61-residue protein sequence, read N- to C-terminus: Small ribosomal subunit protein uS14 (61 aa).

Residues C24, C27, C40, and C43 each coordinate Zn(2+).

Belongs to the universal ribosomal protein uS14 family. Zinc-binding uS14 subfamily. As to quaternary structure, part of the 30S ribosomal subunit. Contacts proteins S3 and S10. Zn(2+) is required as a cofactor.

Functionally, binds 16S rRNA, required for the assembly of 30S particles and may also be responsible for determining the conformation of the 16S rRNA at the A site. This chain is Small ribosomal subunit protein uS14, found in Nitratidesulfovibrio vulgaris (strain DSM 19637 / Miyazaki F) (Desulfovibrio vulgaris).